The sequence spans 147 residues: Small ribosomal subunit protein bS6 (147 aa).

Residues 103-147 are disordered; that stretch reads AARMAANLPSFPEDEDTEEKGSAPLAREEEGIGEEAQTDEAEDKE. The segment covering 133-147 has biased composition (acidic residues); sequence GIGEEAQTDEAEDKE.

Belongs to the bacterial ribosomal protein bS6 family.

Its function is as follows. Binds together with bS18 to 16S ribosomal RNA. This Syntrophobacter fumaroxidans (strain DSM 10017 / MPOB) protein is Small ribosomal subunit protein bS6.